Consider the following 422-residue polypeptide: Putative nickel insertion protein (422 aa).

This sequence belongs to the LarC family.

This chain is Putative nickel insertion protein, found in Synechocystis sp. (strain ATCC 27184 / PCC 6803 / Kazusa).